The chain runs to 107 residues: UPF0145 protein YbjQ (107 aa).

It belongs to the UPF0145 family.

The chain is UPF0145 protein YbjQ from Salmonella gallinarum (strain 287/91 / NCTC 13346).